A 263-amino-acid polypeptide reads, in one-letter code: MKYSTTKIPPAKMNSSADKALVKSPKLRKSQQKPEGVCQMYFMQLRSGLIIEKTSCYFRKEITKRYSPRTAEKCRKQCLVFTACHQQLNKDFTSDVPMLQKCFGRANVPSIQEYSASLSTYNDQSITFVFEDGSYEIYVEDLRKGQEKDKVLFRYYDSQSPSHETGDDVDGQTLLVNLSPTKDKDFLLHANNEEHSVELQKCENQLPDQAFFLLHRKSSECVSFECKNNPGVFIGVKDNHLALIKVGDQTKDSYIEKTIFKLS.

The span at 1–17 (MKYSTTKIPPAKMNSSA) shows a compositional bias: polar residues. A disordered region spans residues 1-28 (MKYSTTKIPPAKMNSSADKALVKSPKLR). Residues 1–65 (MKYSTTKIPP…CYFRKEITKR (65 aa)) form a homeodomain-like HTH domain region. Residues 62–103 (ITKRYSPRTAEKCRKQCLVFTACHQQLNKDFTSDVPMLQKCF) form an interaction with RELA region.

The protein belongs to the IL-1 family. Highly divergent. As to quaternary structure, forms a 1:1:1 heterotrimeric complex with its primary high-affinity receptor IL1RL1 and the coreceptor IL1RAP. Interacts with cargo receptor TMED10; the interaction mediates the translocation from the cytoplasm into the ERGIC (endoplasmic reticulum-Golgi intermediate compartment) and thereby secretion. In terms of processing, the full-length protein can be released from cells and is able to signal via the IL1RL1/ST2 receptor. However, proteolytic processing by CELA1, CSTG/cathepsin G and ELANE/neutrophil elastase produces C-terminal peptides that are more active than the unprocessed full-length protein. May also be proteolytically processed by calpains. Proteolytic cleavage mediated by apoptotic caspases including CASP3 and CASP7 results in IL33 inactivation. In vitro proteolytic cleavage by CASP1 was reported but could not be confirmed in vivo suggesting that IL33 is probably not a direct substrate for that caspase. As to expression, expressed in cultured umbilical artery smooth muscle cells after stimulation with IL1A and IL1B, and to a lesser extent with IFNG. Expressed in vasospastic cerebral arteries after subarachnoid hemorrhage.

It is found in the nucleus. It localises to the chromosome. The protein resides in the cytoplasm. Its subcellular location is the cytoplasmic vesicle. The protein localises to the secretory vesicle. It is found in the secreted. Its function is as follows. Cytokine that binds to and signals through the IL1RL1/ST2 receptor which in turn activates NF-kappa-B and MAPK signaling pathways in target cells. Involved in the maturation of Th2 cells inducing the secretion of T-helper type 2-associated cytokines. Also involved in activation of mast cells, basophils, eosinophils and natural killer cells. Acts as a chemoattractant for Th2 cells, and may function as an 'alarmin', that amplifies immune responses during tissue injury. Induces rapid UCP2-dependent mitochondrial rewiring that attenuates the generation of reactive oxygen species and preserves the integrity of Krebs cycle required for persistent production of itaconate and subsequent GATA3-dependent differentiation of inflammation-resolving alternatively activated macrophages. Functionally, in quiescent endothelia the uncleaved form is constitutively and abundantly expressed, and acts as a chromatin-associated nuclear factor with transcriptional repressor properties, it may sequester nuclear NF-kappaB/RELA, lowering expression of its targets. This form is rapidely lost upon angiogenic or pro-inflammatory activation. This is Interleukin-33 (IL33) from Canis lupus familiaris (Dog).